The chain runs to 87 residues: Putative sodium channel toxin Ts40 (87 aa).

The signal sequence occupies residues 1-19 (MTALFYLLFLTSVIIETHQ). 3 disulfides stabilise this stretch: Cys41–Cys63, Cys47–Cys68, and Cys51–Cys70.

The protein belongs to the long (4 C-C) scorpion toxin superfamily. Sodium channel inhibitor family. As to expression, expressed by the venom gland.

It localises to the secreted. In terms of biological role, putative sodium channel toxin. This is Putative sodium channel toxin Ts40 from Tityus serrulatus (Brazilian scorpion).